Here is a 672-residue protein sequence, read N- to C-terminus: Penicillin-binding protein activator LpoA (672 aa).

A signal peptide spans 1-26; the sequence is MLPFHLVRTQAGRVIPVLLAALFLAG. C27 carries N-palmitoyl cysteine lipidation. A lipid anchor (S-diacylglycerol cysteine) is attached at C27. Positions 298-336 are disordered; sequence APPTDTAQAGQVTPSSDGQNAQSPAPYSDQAVASTTPAP. Over residues 305–322 the composition is skewed to polar residues; it reads QAGQVTPSSDGQNAQSPA. A compositionally biased stretch (low complexity) spans 327-336; it reads QAVASTTPAP.

It belongs to the LpoA family. In terms of assembly, interacts with PBP1a.

The protein resides in the cell outer membrane. Its function is as follows. Regulator of peptidoglycan synthesis that is essential for the function of penicillin-binding protein 1A (PBP1a). The polypeptide is Penicillin-binding protein activator LpoA (Pectobacterium parmentieri (strain WPP163) (Pectobacterium wasabiae (strain WPP163))).